The following is a 1721-amino-acid chain: Latent-transforming growth factor beta-binding protein 1 (1721 aa).

The signal sequence occupies residues 1 to 23 (MAGAWLRWGLLLWAGLLASSAHG). Over residues 64-81 (RSSAAAGAPSRASPGVPS) the composition is skewed to low complexity. The interval 64 to 158 (RSSAAAGAPS…SGGGSRLQVH (95 aa)) is disordered. Pro residues predominate over residues 99–111 (RPPPPPPPEPARP). The segment covering 112–130 (AVPGGQLHPNPGGHPAAAP) has biased composition (low complexity). The EGF-like 1 domain occupies 187 to 219 (TKPSCVPPCQNGGMCLRPQLCVCKPGTKGKACE). 3 disulfide bridges follow: C191–C201, C195–C207, and C209–C218. Residues 228-259 (SPVFGGQSPGAASSWGPPEQAAKHTSSKKADT) form a disordered region. Residues N347 and N378 are each glycosylated (N-linked (GlcNAc...) asparagine). Residues 399–431 (RVVICHLPCMNGGQCSSRDKCQCPPNFTGKLCQ) form the EGF-like 2 domain. Intrachain disulfides connect C403–C413, C407–C419, C421–C430, C559–C581, C568–C594, and C582–C597. N424 is a glycosylation site (N-linked (GlcNAc...) asparagine). The TB 1 domain maps to 557 to 609 (GRCFQETIGSQCGKALPGLSKQEDCCGTVGTSWGFNKCQKCPKKPSYHGYNQM). The N-linked (GlcNAc...) asparagine glycan is linked to N620. In terms of domain architecture, EGF-like 3; calcium-binding spans 626-663 (DINECQLQGVCPNGECLNTMGSYRCTCKIGFGPDPTFS). Disulfide bonds link C630–C641, C636–C650, C652–C665, C679–C702, C689–C714, C703–C717, and C704–C729. O-linked (Glc) serine glycosylation occurs at S647. The TB 2 domain maps to 677-729 (GPCYRLVSSGRQCMHPLSVHLTKQLCCCSVGKAWGPHCEKCPLPGTAAFKEIC). The disordered stretch occupies residues 750-811 (VGKGPVFVKP…APPEKEIPSL (62 aa)). Residues T769 and T801 are each glycosylated (O-linked (GalNAc...) threonine). Residues 873–910 (EINECTVNPDICGAGHCINLPVRYTCICYEGYRFSEQQ) enclose the EGF-like 4; calcium-binding domain. 29 disulfide bridges follow: C877–C889, C884–C898, C900–C913, C919–C931, C926–C940, C942–C955, C961–C972, C967–C981, C984–C996, C1002–C1013, C1008–C1022, C1025–C1036, C1042–C1053, C1048–C1062, C1064–C1077, C1083–C1094, C1089–C1103, C1105–C1118, C1124–C1135, C1130–C1144, C1146–C1159, C1165–C1177, C1172–C1186, C1188–C1200, C1206–C1218, C1212–C1227, C1229–C1242, C1248–C1260, and C1254–C1269. The region spanning 915–956 (DIDECTQVQHLCSQGRCENTEGSFLCICPAGFMASEEGTNCI) is the EGF-like 5; calcium-binding domain. O-linked (Glc) serine glycosylation occurs at S937. The region spanning 957–997 (DVDECLRPDVCGEGHCVNTVGAFRCEYCDSGYRMTQRGRCE) is the EGF-like 6; calcium-binding domain. A (3R)-3-hydroxyasparagine modification is found at N974. Residues 998–1037 (DIDECLNPSTCPDEQCVNSPGSYQCVPCTEGFRGWNGQCL) form the EGF-like 7; calcium-binding domain. A glycan (O-linked (Glc) serine) is linked at S1019. The region spanning 1038–1078 (DVDECLEPNVCANGDCSNLEGSYMCSCHKGYTRTPDHKHCR) is the EGF-like 8; calcium-binding domain. S1059 is a glycosylation site (O-linked (Glc) serine). One can recognise an EGF-like 9; calcium-binding domain in the interval 1079–1119 (DIDECQQGNLCVNGQCKNTEGSFRCTCGQGYQLSAAKDQCE). The EGF-like 10; calcium-binding domain occupies 1120 to 1160 (DIDECQHRHLCAHGQCRNTEGSFQCVCDQGYRASGLGDHCE). N1137 bears the (3R)-3-hydroxyasparagine mark. O-linked (Glc) serine glycosylation occurs at S1141. Residues 1161–1201 (DINECLEDKSVCQRGDCINTAGSYDCTCPDGFQLDDNKTCQ) enclose the EGF-like 11; calcium-binding domain. The Cell attachment site motif lies at 1174-1176 (RGD). N1197 carries an N-linked (GlcNAc...) asparagine glycan. An EGF-like 12; calcium-binding domain is found at 1202–1243 (DINECEHPGLCGPQGECLNTEGSFHCVCQQGFSISADGRTCE). O-linked (Glc) serine glycosylation is present at S1224. Residues 1244–1281 (DIDECVNNTVCDSHGFCDNTAGSFRCLCYQGFQAPQDG) enclose the EGF-like 13; calcium-binding domain. N1250 carries an N-linked (GlcNAc...) asparagine glycan. One can recognise an EGF-like 14; calcium-binding domain in the interval 1286–1328 (DVNECELLSGVCGEAFCENVEGSFLCVCADENQEYSPMTGQCR). Positions 1344–1411 (EEKKECYYNL…PKGKGFVPAG (68 aa)) are 8-Cys3 region. Residues 1347-1401 (KECYYNLNDASLCDNVLAPNVTKQECCCTSGVGWGDNCEIFPCPVLGTAEFTEMC) form the TB 3 domain. 4 disulfides stabilise this stretch: C1349-C1372, C1359-C1384, C1373-C1389, and C1374-C1401. The N-linked (GlcNAc...) asparagine glycan is linked to N1366. Residue S1414 is modified to Phosphoserine; by FAM20C. Residues 1424–1466 (DADECLLFGQEICKNGFCLNTRPGYECYCKQGTYYDPVKLQCF) form the EGF-like 15; calcium-binding domain. The EGF-like 16; calcium-binding domain occupies 1467 to 1503 (DMDECQDPSSCIDGQCVNTEGSYNCFCTHPMVLDASE). 6 disulfide bridges follow: C1471–C1482, C1477–C1491, C1526–C1550, C1536–C1562, C1551–C1565, and C1552–C1577. An O-linked (Glc) serine glycan is attached at S1488. The C-terminal domain stretch occupies residues 1507–1721 (IRPAESNEQI…LNLEKDSDLE (215 aa)). The region spanning 1524 to 1577 (DLCWEHLSDEYVCSRPLVGKQTTYTECCCLYGEAWGMQCALCPLKDSDDYAQLC) is the TB 4 domain. Residues S1597 and S1616 each carry the phosphoserine modification. One can recognise an EGF-like 17 domain in the interval 1621–1657 (QAEECGILNGCENGRCVRVQEGYTCDCFDGYHLDTAK). 5 disulfide bridges follow: C1625–C1636, C1631–C1645, C1666–C1681, C1676–C1690, and C1692–C1705. Positions 1662–1706 (DVNECDELNNRMSLCKNAKCINTDGSYKCLCLPGYVPSDKPNYCT) constitute an EGF-like 18; calcium-binding domain. S1687 is a glycosylation site (O-linked (Glc) serine).

Belongs to the LTBP family. In terms of assembly, interacts with TGFB1; associates via disulfide bonds with the Latency-associated peptide chain (LAP) regulatory chain of TGFB1, leading to regulate activation of TGF-beta-1. LTBP1 does not bind directly to TGF-beta-1, the active chain of TGFB1. Interacts (via C-terminal domain) with FBN1 (via N-terminal domain). Interacts with FBN2. Interacts with ADAMTSL2. Interacts with EFEMP2. Contains hydroxylated asparagine residues. Post-translationally, isoform Short N-terminus is blocked. In terms of processing, two intrachain disulfide bonds from the TB3 domain are rearranged upon TGFB1 binding, and form interchain bonds with TGFB1 propeptide, anchoring it to the extracellular matrix. O-glycosylated on serine residues by POGLUT2 and POGLUT3. Expressed in the aorta (at protein level). Isoform Long: Expressed in fibroblasts.

It is found in the secreted. It localises to the extracellular space. The protein localises to the extracellular matrix. Key regulator of transforming growth factor beta (TGFB1, TGFB2 and TGFB3) that controls TGF-beta activation by maintaining it in a latent state during storage in extracellular space. Associates specifically via disulfide bonds with the Latency-associated peptide (LAP), which is the regulatory chain of TGF-beta, and regulates integrin-dependent activation of TGF-beta. Outcompeted by LRRC32/GARP for binding to LAP regulatory chain of TGF-beta. This is Latent-transforming growth factor beta-binding protein 1 from Homo sapiens (Human).